A 365-amino-acid chain; its full sequence is MDIIETAKLEEHLENQPSDPTNTYTRPTEPVEEENKNGNGKPKSLSSGLRKGTKKYPDYIQIAMPTESRNKFPLEWWKTGIAFIYAVFNLVLTTVMITVVHERVPPKELSPPLPDKFFDYIDRVKWAFSVSEINGIILVGLWITQWLFLRYKSIVGRRFCFIIGTLYLYRCITMYVTTLPVPGMHFQCAPKLNGDSQAKVQRILRLISGGGLSITGSHILCGDFLFSGHTVTLTLTYLFIKEYSPRHFWWYHLICWLLSAAGIICILVAHEHYTVDVIIAYYITTRLFWWYHSMANEKNLKVSLQTNFLSRAWWFPIFYFFEKNVQGSIPCCFSWPLSWPPGCFKSSCKKYSRVQKIGEDNEKST.

Over residues 1–14 (MDIIETAKLEEHLE) the composition is skewed to basic and acidic residues. The disordered stretch occupies residues 1-52 (MDIIETAKLEEHLENQPSDPTNTYTRPTEPVEEENKNGNGKPKSLSSGLRKG). Polar residues predominate over residues 15–26 (NQPSDPTNTYTR). 5 consecutive transmembrane segments (helical) span residues 80–100 (GIAF…ITVV), 128–148 (FSVS…QWLF), 159–179 (FCFI…VTTL), 218–240 (HILC…YLFI), and 248–268 (FWWY…CILV). His-229 is an active-site residue. Residues His-272 and Asp-276 contribute to the active site. The helical transmembrane segment at 273–290 (YTVDVIIAYYITTRLFWW) threads the bilayer. Residues 291–365 (YHSMANEKNL…KIGEDNEKST (75 aa)) lie on the Cytoplasmic side of the membrane. 4 S-palmitoyl cysteine lipidation sites follow: Cys-331, Cys-332, Cys-343, and Cys-348.

The protein belongs to the sphingomyelin synthase family. Post-translationally, palmitoylated on Cys-331, Cys-332, Cys-343 and Cys-348; which plays an important role in plasma membrane localization.

It is found in the cell membrane. It localises to the golgi apparatus membrane. It catalyses the reaction an N-acylsphing-4-enine + a 1,2-diacyl-sn-glycero-3-phosphocholine = a sphingomyelin + a 1,2-diacyl-sn-glycerol. The catalysed reaction is an N-acylsphinganine + a 1,2-diacyl-sn-glycero-3-phosphocholine = an N-acylsphinganine-1-phosphocholine + a 1,2-diacyl-sn-glycerol. It carries out the reaction an N-acyl-(4R)-4-hydroxysphinganine + a 1,2-diacyl-sn-glycero-3-phosphocholine = an N-acyl-(4R)-4-hydroxysphinganine-phosphocholine + a 1,2-diacyl-sn-glycerol. The enzyme catalyses an N-acylsphing-4-enine + a 1,2-diacyl-sn-glycero-3-phosphoethanolamine = an N-acylsphing-4-enine 1-phosphoethanolamine + a 1,2-diacyl-sn-glycerol. It catalyses the reaction an N-acylsphinganine + a 1,2-diacyl-sn-glycero-3-phosphoethanolamine = an N-acylsphinganine-1-phosphoethanolamine + a 1,2-diacyl-sn-glycerol. The catalysed reaction is an N-acyl-(4R)-4-hydroxysphinganine + a 1,2-diacyl-sn-glycero-3-phosphoethanolamine = an N-acyl-(4R)-4-hydroxysphinganine-1-phosphoethanolamine + a 1,2-diacyl-sn-glycerol. It carries out the reaction 1,2-dihexadecanoyl-sn-glycero-3-phosphocholine + an N-acylsphing-4-enine = 1,2-dihexadecanoyl-sn-glycerol + a sphingomyelin. The enzyme catalyses 1-(9Z-octadecenoyl)-2-acyl-sn-3-glycerol + a sphingomyelin = a 1-(9Z-octadecenoyl)-2-acyl-sn-glycero-3-phosphocholine + an N-acylsphing-4-enine. It catalyses the reaction N-hexadecanoylsphinganine + a 1,2-diacyl-sn-glycero-3-phosphocholine = N-hexadecanoyl-sphinganine-1-phosphocholine + a 1,2-diacyl-sn-glycerol. The catalysed reaction is N-hexadecanoyl-(4R)-hydroxysphinganine + a 1,2-diacyl-sn-glycero-3-phosphocholine = N-hexadecanoyl-(4R)-hydroxysphinganine-phosphocholine + a 1,2-diacyl-sn-glycerol. It carries out the reaction N-hexadecanoylsphinganine + a 1,2-diacyl-sn-glycero-3-phosphoethanolamine = N-hexadecanoyl-sphinganine-1-phosphoethanolamine + a 1,2-diacyl-sn-glycerol. The enzyme catalyses N-hexadecanoyl-(4R)-hydroxysphinganine + a 1,2-diacyl-sn-glycero-3-phosphoethanolamine = N-hexadecanoyl-(4R)-hydroxysphinganine-1-phosphoethanolamine + a 1,2-diacyl-sn-glycerol. It functions in the pathway sphingolipid metabolism. Its function is as follows. Sphingomyelin synthase that primarily contributes to sphingomyelin synthesis and homeostasis at the plasma membrane. Catalyzes the reversible transfer of phosphocholine moiety in sphingomyelin biosynthesis: in the forward reaction transfers phosphocholine head group of phosphatidylcholine (PC) on to ceramide (CER) to form ceramide phosphocholine (sphingomyelin, SM) and diacylglycerol (DAG) as by-product, and in the reverse reaction transfers phosphocholine from SM to DAG to form PC and CER. The direction of the reaction appears to depend on the levels of CER and DAG in the plasma membrane. Does not use free phosphorylcholine or CDP-choline as donors. Can also transfer phosphoethanolamine head group of phosphatidylethanolamine (PE) on to ceramide (CER) to form ceramide phosphoethanolamine (CPE). Regulates receptor-mediated signal transduction via mitogenic DAG and proapoptotic CER, as well as via SM, a structural component of membrane rafts that serve as platforms for signal transduction and protein sorting. To a lesser extent, plays a role in secretory transport via regulation of DAG pool at the Golgi apparatus and its downstream effects on PRKD1. Required for normal bone matrix mineralization. The chain is Phosphatidylcholine:ceramide cholinephosphotransferase 2 (SGMS2) from Macaca fascicularis (Crab-eating macaque).